Here is a 63-residue protein sequence, read N- to C-terminus: Small ribosomal subunit protein eS30 (63 aa).

Residues 1–33 are disordered; the sequence is MGKVHGSLARAGKVKSQTPKVEKQEKPKKPQGR.

Belongs to the eukaryotic ribosomal protein eS30 family. Component of the small ribosomal subunit. Mature ribosomes consist of a small (40S) and a large (60S) subunit. The 40S subunit contains about 32 different proteins and 1 molecule of RNA (18S). The 60S subunit contains 45 different proteins and 3 molecules of RNA (25S, 5.8S and 5S).

The protein resides in the cytoplasm. Component of the ribosome, a large ribonucleoprotein complex responsible for the synthesis of proteins in the cell. The small ribosomal subunit (SSU) binds messenger RNAs (mRNAs) and translates the encoded message by selecting cognate aminoacyl-transfer RNA (tRNA) molecules. The large subunit (LSU) contains the ribosomal catalytic site termed the peptidyl transferase center (PTC), which catalyzes the formation of peptide bonds, thereby polymerizing the amino acids delivered by tRNAs into a polypeptide chain. The nascent polypeptides leave the ribosome through a tunnel in the LSU and interact with protein factors that function in enzymatic processing, targeting, and the membrane insertion of nascent chains at the exit of the ribosomal tunnel. This chain is Small ribosomal subunit protein eS30 (RPS30), found in Candida albicans (strain SC5314 / ATCC MYA-2876) (Yeast).